The primary structure comprises 475 residues: MTEEKPAKKIGLLALIALVISSSIGSGVFGLTSDLASASAPGPVLIAWVIVGFGILMLALSLNNLLMKEPELEGIFSYAEKGFGPFAGFISGWGYWLSAWLGNVTFATILMSALGYFFPIFKSRQNLPSILVASVLSWSLTYFVNRGVEGAAAINTLVTICKLIPLFVFIIFGIVLFKGHLFTQAFWNNMSSSFVAGDVMSQIKNCMMVMMWVFVGIEGASMLSARAEKKSDAGKATILGLVSLLAIYILASVLPYGYLTQDQLASIKQPAMLYIFEQMVGTWGGYFIGVGLIISILGAWLSWTMLPAETMLLMAKQNLLPAYFGRVNKKKAPTFALVVTAGLIQVFLFTLLFTTKAYNFAYSLCTASIIVCYMLVAAYQIKYSWAHLQEKGNRQQLLIGVLALLFEIAGILMAGVSYLLLCFIAYIPGIYFYGRARKNNGHQHFLSKGEWLITTIIVIGAIIGIWLVVSGKIVI.

Helical transmembrane passes span 10–30, 42–62, 74–94, 101–121, 157–177, 205–225, 238–258, 283–303, 333–353, 361–381, 397–417, and 451–471; these read IGLLALIALVISSSIGSGVFG, GPVLIAWVIVGFGILMLALSL, GIFSYAEKGFGPFAGFISGWG, LGNVTFATILMSALGYFFPIF, LVTICKLIPLFVFIIFGIVLF, NCMMVMMWVFVGIEGASMLSA, ILGLVSLLAIYILASVLPYGY, WGGYFIGVGLIISILGAWLSW, PTFALVVTAGLIQVFLFTLLF, AYSLCTASIIVCYMLVAAYQI, LLIGVLALLFEIAGILMAGVS, and WLITTIIVIGAIIGIWLVVSG.

The protein belongs to the amino acid-polyamine-organocation (APC) superfamily. Basic amino acid/polyamine antiporter (APA) (TC 2.A.3.2) family.

The protein resides in the cell membrane. It carries out the reaction L-ornithine(in) + L-arginine(out) = L-ornithine(out) + L-arginine(in). In terms of biological role, catalyzes electroneutral exchange between L-arginine and L-ornithine. The chain is Arginine/ornithine antiporter (arcD) from Latilactobacillus sakei (Lactobacillus sakei).